We begin with the raw amino-acid sequence, 447 residues long: tRNA-2-methylthio-N(6)-dimethylallyladenosine synthase (447 aa).

In terms of domain architecture, MTTase N-terminal spans 3-120; it reads KKLYIKTNGC…LPALLNERLE (118 aa). [4Fe-4S] cluster contacts are provided by Cys12, Cys49, Cys83, Cys157, Cys161, and Cys164. Residues 143 to 375 enclose the Radical SAM core domain; sequence RAEGPTAFVS…QNRLLMNAAR (233 aa). The 64-residue stretch at 378-441 folds into the TRAM domain; it reads ESMIGSKQKI…PNSLRGRLLE (64 aa).

The protein belongs to the methylthiotransferase family. MiaB subfamily. In terms of assembly, monomer. The cofactor is [4Fe-4S] cluster.

The protein resides in the cytoplasm. The catalysed reaction is N(6)-dimethylallyladenosine(37) in tRNA + (sulfur carrier)-SH + AH2 + 2 S-adenosyl-L-methionine = 2-methylsulfanyl-N(6)-dimethylallyladenosine(37) in tRNA + (sulfur carrier)-H + 5'-deoxyadenosine + L-methionine + A + S-adenosyl-L-homocysteine + 2 H(+). Catalyzes the methylthiolation of N6-(dimethylallyl)adenosine (i(6)A), leading to the formation of 2-methylthio-N6-(dimethylallyl)adenosine (ms(2)i(6)A) at position 37 in tRNAs that read codons beginning with uridine. This is tRNA-2-methylthio-N(6)-dimethylallyladenosine synthase from Legionella pneumophila (strain Paris).